Reading from the N-terminus, the 997-residue chain is MTTAINNNIVNKEFDLKDKTFLASGKTKTIYQLNKEDQYVLIESNSAITAGDGAKKDILPNKDIYSTTTTVNNFKVLQLSGINTHFVKQVEPNAFIAKKCSMIPLEVIVRRLATGSYLKRNTHVTEGTKFNPPLIEFTFKDDVQHDPLVTEQDILEMNLKIGGVPITSKLLSQTRHIATLSFEALERAWQSLDVTLVDFKVEFGITSQGELILADVIDNDSWRIWPKGDKTLMKDKQVYRNLPSALNTPGATPTTQSGPLLNTLSDQQLKMIEDNYAWVATSTEKLVEFTAANLNNNNNNNNNNSNNNNNNTSSTSRSNSLPNVPSITTTPTLHHHHHHHQQQQSGVGNNNNVNSGFQVQLNQPLVGIIMGSQSDWETMKLAANTLTTLGVPFETRIVSAHRTPDRLFEYAKTAKSRGLKIVIAGAGGAAHLPGMVAALTPLPVFGVPVQSKALSGVDSLLSIVQMPAGIPVGTVAIGAAGATNAALLSAAVLAPYYPSIELSLDLYRKKQTDAVAEIPVDNPTSTSTTTTTTTTSNATSILSAIHTSTINSNTSSHNNNQQQQQQQQTILPTQPTIINTPTPVRSSVSRSQSPLPSGNGSSIISQEKTPLSTFVLSTCRPSALVLPPGSTIGILGGGQLARMMAIAAAQLGYKTHIFCPENDPSASHVATYTTKSNYNNYSALDIFARQVDVVTYEFENIMVEPVEYLTKQVAVFPDPKILRTCQDRVLEKTFIQSLDIPTAQFQSVESFNDLKSAIEKIGYPAILKSNTMGYDGKGQVKLTDQVDLEQAWKKVTSETCATKAILEQYIEFESEASVIVARALDGTELTFPLVTNKHRNHILRQTIAPAQLPEYIHKQANEIGLKIARSNGLVGIIAVELFVVKNNETGQYSLMVNELAPRPHNSGHWTIEGCVTSQFEQLIRCVCGLPLGSVDFTKRISEAEFIQQQIPPIVMTNLLGQEVNGWEKILQTKGSHLHIYAKGDAKEGRKMGHVTQQ.

The tract at residues 1 to 305 (MTTAINNNIV…NNNNNNNNNS (305 aa)) is SAICAR synthetase. 3 stretches are compositionally biased toward low complexity: residues 294-323 (LNNN…SLPN), 342-355 (QQQS…NVNS), and 524-536 (TSTS…TTTS). Disordered regions lie at residues 294–355 (LNNN…NVNS), 518–538 (IPVD…TSNA), 550–569 (INSN…QQQT), and 575–604 (PTII…SSII). Positions 305–997 (SNNNNNNTSS…GRKMGHVTQQ (693 aa)) are AIR carboxylase. Over residues 575-597 (PTIINTPTPVRSSVSRSQSPLPS) the composition is skewed to low complexity. Residues Arg-728, Lys-768, Gln-779, 807 to 810 (EQYI), and Glu-815 contribute to the ATP site. Residues 732 to 927 (KTFIQSLDIP…QFEQLIRCVC (196 aa)) enclose the ATP-grasp domain. Mg(2+)-binding residues include Glu-880 and Glu-898. Position 897 to 898 (897 to 898 (NE)) interacts with ATP.

This sequence in the N-terminal section; belongs to the SAICAR synthetase family. It in the C-terminal section; belongs to the AIR carboxylase family. Class I subfamily. Mg(2+) is required as a cofactor. The cofactor is Mn(2+).

The catalysed reaction is 5-amino-1-(5-phospho-D-ribosyl)imidazole-4-carboxylate + L-aspartate + ATP = (2S)-2-[5-amino-1-(5-phospho-beta-D-ribosyl)imidazole-4-carboxamido]succinate + ADP + phosphate + 2 H(+). It carries out the reaction 5-amino-1-(5-phospho-D-ribosyl)imidazole-4-carboxylate + H(+) = 5-amino-1-(5-phospho-beta-D-ribosyl)imidazole + CO2. The protein operates within purine metabolism; IMP biosynthesis via de novo pathway; 5-amino-1-(5-phospho-D-ribosyl)imidazole-4-carboxylate from 5-amino-1-(5-phospho-D-ribosyl)imidazole (carboxylase route): step 1/1. It participates in purine metabolism; IMP biosynthesis via de novo pathway; 5-amino-1-(5-phospho-D-ribosyl)imidazole-4-carboxamide from 5-amino-1-(5-phospho-D-ribosyl)imidazole-4-carboxylate: step 1/2. Bifunctional enzyme involved in de novo IMP synthesis, an essential step for de nove purine synthesis. The protein is Bifunctional purine synthesis protein purC/E (purC/E) of Dictyostelium discoideum (Social amoeba).